Reading from the N-terminus, the 1141-residue chain is MRRRDVAFCLLLLPAFMTQAVYGQRKKGPKPNTLARKNDFQDAICFIDVVFILDSSESSKIVLFDNQKDFVDSLSEKIFQLTPGRSLKYDIKLAALQFSSSVQIDPPLSSWKDLRTFKQRVKSLNLIGQGTFSYYAISNATRLLKREGRKDGVKVALLMTDGIDHPKSPDVQSISEDARILGISFITVGLSTVVNEAKLRLISGDPSNEPVLLLSDPTLVDRIQERLGVLFERKCEHKICECEKGEPGDPGPPGTHGNPGIKGERGPKGNPGDAQKGETGERGPVGIPGYKGDKGERGECGKPGMKGDKGPEGPYGPKGPRGIQGIGGPPGDPGPKGFQGNKGEPGPPGPYGPPGAPGIGQQGVKGERGQEGRMGAPGPIGIGEPGQPGPRGPEGAPGERGLPGEGFPGPKGEKGSEGPIGPQGLQGLSIKGDKGDLGPVGPQGPAGIPGIGSQGEQGIQGPSGPPGPQGPPGQGSPGPKGEVGQMGPTGPRGPMGIGVQGPKGEPGTVGLPGQPGVPGEDGASGKKGEAGLPGTRGPEGMPGKGQPGPKGDEGKKGSKGNQGQRGFPGPEGPKGEPGVMGPFGMPGASIPGPSGPKGDRGGPGMPGLKGEPGLPVRGPKGAQGPRGPVGAPGLKGDGYPGVAGPRGLPGPPGPMGLRGVGDTGAKGEPGVRGPPGPSGPRGIGTQGPKGDTGQKGLPGPPGPPGYGSQGIKGEQGPQGFPGSKGTVGLGLPGQKGEHGDRGDVGRKGEKGETGEPGSPGKQGLQGPKGDLGLTKEEIIKLIIEICGCGPKCKETPLELVFVIDSSESVGPENFQIIQSFVKTLADRVALDLGTARIGIINYSHKVEKVASLKQFSSKDDFKLVVDNMQYLGEGTYTATALQAANDMFKEARPGVKKVALVITDGQTDSRDKKKLADVVKDANDSNVEIFVIGVVKKDDPNFEIFHKEMNLIATDAEHVYQFDDFFTLQDTLKQKLSKKICEDFDSYLIQVFGSPSFQPEFGVSEREVSVSTPKPAKEMSKSFNVSRGQNEETESYVLTEAGILAIPTPPEATNTLEPLLSSREGVETRTPNPNLLQSEKSLYKDPRCEEALKPGECGDYVVRWYYDKQVNSCARFWFSGCNGSGNRFHSEKECRETCIKQ.

Positions Met1 to Ala20 are cleaved as a signal peptide. Positions Asp48–Leu227 constitute a VWFA 1 domain. Residues Cys242–Asp770 are disordered. Collagen-like domains follow at residues Glu243–Cys300, Gly301–Gly358, Gly501–Lys544, Gly545–Ala588, and Gly733–Gly769. Basic and acidic residues predominate over residues Lys291–Pro311. Positions Pro335–Glu344 are enriched in low complexity. Residues Pro345–Ala356 show a composition bias toward pro residues. Residues Lys735–Thr753 are compositionally biased toward basic and acidic residues. Positions Glu798 to Leu976 constitute a VWFA 2 domain. One can recognise a BPTI/Kunitz inhibitor domain in the interval Cys1088–Cys1138. Cystine bridges form between Cys1088/Cys1138, Cys1097/Cys1121, and Cys1113/Cys1134.

The protein belongs to the VWA-containing collagen family. In terms of assembly, trimer or homomer. Secreted into as a 135 kDa monomer under reducing conditions and as a homotrimer under non-reducing conditions. Expressed in skin, intestine, sternum, brain and kidney. Lower expression is also observed in heart, lung, sciatic nerve, dorsal root ganglia, peripheral nerves and calvaria of newborn mice and in intestine and brain of adult mice. Found in basement membrane surrounding a particular subset of Schwann cells in adult sciatic nerve.

The protein localises to the secreted. Its subcellular location is the extracellular space. The protein resides in the extracellular matrix. It localises to the basement membrane. May act as a cell-binding protein. The polypeptide is Collagen alpha-1(XXVIII) chain (Col28a1) (Mus musculus (Mouse)).